The primary structure comprises 330 residues: uncharacterized protein (330 aa).

The region spanning 4-242 (LTISDLVVEY…AGEVLFEQST (239 aa)) is the ABC transporter domain. Residue 40-47 (GPSGCGKT) participates in ATP binding. 210 to 330 (DRVLELMPAQ…LIEHRELASE (121 aa)) contacts a nucleoside 3',5'-cyclic phosphate.

This sequence belongs to the ABC transporter superfamily.

This is an uncharacterized protein from Mycobacterium bovis (strain ATCC BAA-935 / AF2122/97).